The following is a 322-amino-acid chain: N-acetyl-gamma-glutamyl-phosphate reductase (322 aa).

Residue Cys117 is part of the active site.

The protein belongs to the NAGSA dehydrogenase family. Type 2 subfamily.

It localises to the cytoplasm. The enzyme catalyses N-acetyl-L-glutamate 5-semialdehyde + phosphate + NADP(+) = N-acetyl-L-glutamyl 5-phosphate + NADPH + H(+). Its pathway is amino-acid biosynthesis; L-arginine biosynthesis; N(2)-acetyl-L-ornithine from L-glutamate: step 3/4. Its function is as follows. Catalyzes the NADPH-dependent reduction of N-acetyl-5-glutamyl phosphate to yield N-acetyl-L-glutamate 5-semialdehyde. In Trichormus variabilis (strain ATCC 29413 / PCC 7937) (Anabaena variabilis), this protein is N-acetyl-gamma-glutamyl-phosphate reductase.